The primary structure comprises 166 residues: Phosphopantetheine adenylyltransferase (166 aa).

A substrate-binding site is contributed by S11. Residues 11–12 and H19 contribute to the ATP site; that span reads SF. Substrate-binding residues include K43, A76, and R90. Residues 91–93, E101, and 126–132 contribute to the ATP site; these read GLR and YRYFSSS.

Belongs to the bacterial CoaD family. As to quaternary structure, homohexamer. Mg(2+) is required as a cofactor.

Its subcellular location is the cytoplasm. The enzyme catalyses (R)-4'-phosphopantetheine + ATP + H(+) = 3'-dephospho-CoA + diphosphate. It functions in the pathway cofactor biosynthesis; coenzyme A biosynthesis; CoA from (R)-pantothenate: step 4/5. In terms of biological role, reversibly transfers an adenylyl group from ATP to 4'-phosphopantetheine, yielding dephospho-CoA (dPCoA) and pyrophosphate. This Streptococcus mutans serotype c (strain ATCC 700610 / UA159) protein is Phosphopantetheine adenylyltransferase.